Consider the following 649-residue polypeptide: Nitrosuccinic acid synthase npaA (649 aa).

Belongs to the nitrosuccinic acid synthase family. FAD is required as a cofactor.

It carries out the reaction L-aspartate + 3 NADPH + 3 O2 + 2 H(+) = 2-nitrobutanedioate + 3 NADP(+) + 4 H2O. It participates in mycotoxin biosynthesis. Its function is as follows. Nitrosuccinic acid synthase; part of the gene cluster that mediates the biosynthesis of the deadly neurotoxic nitroalkane 3-nitropropanoic acid (3-NPA) that acts as an antimetabolite of succinate and irreversibly inhibits succinate dehydrogenase and disrupts mitochondrial oxidative phosphorylation. NpaA catalyzes the iterative oxidation of L-aspartic acid to nitrosuccinic acid (2-nitrobutanedioate). Alternative amino acid substrates such as L-glutamate and D-aspartate are not accepted by npaA as a substrate, showing the strict substrate specificity toward L-aspartate. The nitrosuccinic acid decarboxylase npaB then facilitates decarboxylation of Nitrosuccinic acid to produce 3-NPA. This Aspergillus oryzae (strain ATCC 42149 / RIB 40) (Yellow koji mold) protein is Nitrosuccinic acid synthase npaA.